The primary structure comprises 496 residues: Protein nucleotidyltransferase YdiU (496 aa).

Residues G98, G100, R101, K116, D128, G129, R179, and R186 each coordinate ATP. Catalysis depends on D259, which acts as the Proton acceptor. Mg(2+) is bound by residues N260 and D269. Residue D269 participates in ATP binding.

This sequence belongs to the SELO family. It depends on Mg(2+) as a cofactor. Requires Mn(2+) as cofactor.

The catalysed reaction is L-seryl-[protein] + ATP = 3-O-(5'-adenylyl)-L-seryl-[protein] + diphosphate. The enzyme catalyses L-threonyl-[protein] + ATP = 3-O-(5'-adenylyl)-L-threonyl-[protein] + diphosphate. It carries out the reaction L-tyrosyl-[protein] + ATP = O-(5'-adenylyl)-L-tyrosyl-[protein] + diphosphate. It catalyses the reaction L-histidyl-[protein] + UTP = N(tele)-(5'-uridylyl)-L-histidyl-[protein] + diphosphate. The catalysed reaction is L-seryl-[protein] + UTP = O-(5'-uridylyl)-L-seryl-[protein] + diphosphate. The enzyme catalyses L-tyrosyl-[protein] + UTP = O-(5'-uridylyl)-L-tyrosyl-[protein] + diphosphate. Functionally, nucleotidyltransferase involved in the post-translational modification of proteins. It can catalyze the addition of adenosine monophosphate (AMP) or uridine monophosphate (UMP) to a protein, resulting in modifications known as AMPylation and UMPylation. In Albidiferax ferrireducens (strain ATCC BAA-621 / DSM 15236 / T118) (Rhodoferax ferrireducens), this protein is Protein nucleotidyltransferase YdiU.